The primary structure comprises 264 residues: Glycosylphosphatidylinositol anchor biosynthesis protein 11 (264 aa).

The segment at 1–45 (MPLVDPVTMSTPSTPAKAMGKSLPNTVKDPSPPPKAGSHTRSPVE) is disordered. 6 helical membrane passes run 49 to 69 (NSYYIAASIPALQLQIFVLLW), 83 to 103 (LILPVMALIQVFYAVVLLPVA), 132 to 152 (LLSLLLTLIATPPIHALMVLF), 160 to 180 (APHTFLCALNLSLLTLFPLFY), 202 to 222 (SVGGLVGACFGAWLGAVPIPL), and 233 to 253 (VTVLTGIYVGYAIGSYGGRTL).

The protein belongs to the PIGF family.

The protein resides in the endoplasmic reticulum membrane. The protein operates within glycolipid biosynthesis; glycosylphosphatidylinositol-anchor biosynthesis. Acts in the GPI biosynthetic pathway between GlcNAc-PI synthesis and GPI transfer to protein. The polypeptide is Glycosylphosphatidylinositol anchor biosynthesis protein 11 (GPI11) (Pyricularia oryzae (strain 70-15 / ATCC MYA-4617 / FGSC 8958) (Rice blast fungus)).